A 192-amino-acid polypeptide reads, in one-letter code: Ion-translocating oxidoreductase complex subunit A (192 aa).

6 consecutive transmembrane segments (helical) span residues 5-25 (LLLL…FLGL), 39-59 (IGMS…SYLV), 65-85 (LPFD…AVVV), 102-122 (ALGI…VALL), 134-154 (AIFG…FSAM), and 171-191 (AIAM…TGLV).

It belongs to the NqrDE/RnfAE family. In terms of assembly, the complex is composed of six subunits: RnfA, RnfB, RnfC, RnfD, RnfE and RnfG.

The protein localises to the cell inner membrane. Part of a membrane-bound complex that couples electron transfer with translocation of ions across the membrane. The chain is Ion-translocating oxidoreductase complex subunit A from Shewanella baltica (strain OS223).